We begin with the raw amino-acid sequence, 609 residues long: Threonine--tRNA ligase (609 aa).

The editing domain stretch occupies residues 1–143 (MRVLYLHTER…SFKPGDSRAE (143 aa)). 2 catalytic regions span residues 195–491 (PRYL…PRLP) and 196–491 (RYLE…PRLP). The Zn(2+) site is built by C288, H339, and H460.

The protein belongs to the class-II aminoacyl-tRNA synthetase family. As to quaternary structure, homodimer. It depends on Zn(2+) as a cofactor.

It is found in the cytoplasm. The catalysed reaction is tRNA(Thr) + L-threonine + ATP = L-threonyl-tRNA(Thr) + AMP + diphosphate + H(+). Its function is as follows. Catalyzes the attachment of threonine to tRNA(Thr) in a two-step reaction: L-threonine is first activated by ATP to form Thr-AMP and then transferred to the acceptor end of tRNA(Thr). Also edits incorrectly charged L-seryl-tRNA(Thr). In Pyrobaculum neutrophilum (strain DSM 2338 / JCM 9278 / NBRC 100436 / V24Sta) (Thermoproteus neutrophilus), this protein is Threonine--tRNA ligase.